Here is a 242-residue protein sequence, read N- to C-terminus: MLTALVIDDEQFAREELAELLDETGQVEVVGDASNAILGLKKINELKPDVVFLDIQMPQVTGIELLGMLDPETMPYVVFVTAYDQYAIQAFEDNAFDYLLKPVDPCRLNKTVKRLNKVISQSALTQQLSAITPDTLDQIPCIGHNRIVIMATETVECAYSDISGVHVRSTSQTASTQLTLKTLEEKTPLVRCHRQYLVSIKAISEIKLLENGLAEIITKTGFEIPVSRRYLKVLKEMLGISH.

The 114-residue stretch at 3 to 116 folds into the Response regulatory domain; the sequence is TALVIDDEQF…RLNKTVKRLN (114 aa). At D54 the chain carries 4-aspartylphosphate. One can recognise an HTH LytTR-type domain in the interval 139–240; that stretch reads IPCIGHNRIV…LKVLKEMLGI (102 aa).

This is an uncharacterized protein from Vibrio parahaemolyticus serotype O3:K6 (strain RIMD 2210633).